The following is a 215-amino-acid chain: Adenylate kinase (215 aa).

ATP is bound at residue 10–15; that stretch reads GAGKGT. The segment at 30–59 is NMP; that stretch reads STGDMFRAAMKNETEMGKLAKSFIDKGELV. AMP is bound by residues threonine 31, arginine 36, 57–59, 86–89, and glutamine 93; these read ELV and GYPR. The segment at 127 to 165 is LID; the sequence is GRYICRNCGATYHKIFNPTKVEGTCDVCGSHDLYQRADD. Arginine 128 contacts ATP. Residues cysteine 131 and cysteine 134 each coordinate Zn(2+). 137–138 lines the ATP pocket; it reads TY. The Zn(2+) site is built by cysteine 151 and cysteine 154. Arginine 162 and arginine 173 together coordinate AMP. Glutamine 201 serves as a coordination point for ATP.

This sequence belongs to the adenylate kinase family. In terms of assembly, monomer.

It localises to the cytoplasm. It carries out the reaction AMP + ATP = 2 ADP. It participates in purine metabolism; AMP biosynthesis via salvage pathway; AMP from ADP: step 1/1. Its function is as follows. Catalyzes the reversible transfer of the terminal phosphate group between ATP and AMP. Plays an important role in cellular energy homeostasis and in adenine nucleotide metabolism. This is Adenylate kinase from Lactococcus lactis subsp. cremoris (strain SK11).